The chain runs to 439 residues: 26S proteasome regulatory subunit 4 homolog (439 aa).

The interval 1–46 (MGNNQSQGQGDKGEKKDQPKYQPPPPPTQFGKKKKRRGAETSTKLP) is disordered. 225–232 (GEPGTGKT) provides a ligand contact to ATP.

The protein belongs to the AAA ATPase family.

Its subcellular location is the cytoplasm. The protein localises to the nucleus. In terms of biological role, the 26S proteasome is involved in the ATP-dependent degradation of ubiquitinated proteins. The regulatory (or ATPase) complex confers ATP dependency and substrate specificity to the 26S complex. Plays an important role in regulating both growth and multicellular development. This is 26S proteasome regulatory subunit 4 homolog (psmC1) from Dictyostelium discoideum (Social amoeba).